A 332-amino-acid polypeptide reads, in one-letter code: MKNLRNRNFLTLLDFTQKEMEFLLNLSEDLKRAKYAGIEQQKMKGKNIALLFEKDSTRTRCAFETAAYDQGAHVTYLGPTGSQMGKKESTKDTARVLGGMYDGIEYRGFSQRVVEDLAKYSGVPVWNGLTDEDHPTQVLADFLTAKEVLKKPYNEINFTYVGDGRNNVANALMQGAAIMGMTFHLVCPKELNPTDELLNRCNDIADKNGGEILITDDIDEGVKGSDVIYTDVWVSMGEPDEVWEKRIKLLEPYRVTKELMKKTGNPHTIFEHCLPSFHDTETIIGKQIQEKYGLTEMEVTNEVFESEQSVVFQEAENRAHTIKAVMVATLGE.

Carbamoyl phosphate is bound by residues 56-59 (STRT), Gln-83, Arg-107, and 134-137 (HPTQ). L-ornithine-binding positions include Asn-167, Asp-231, and 235–236 (SM). Carbamoyl phosphate contacts are provided by residues 273 to 274 (CL) and Arg-318.

The protein belongs to the aspartate/ornithine carbamoyltransferase superfamily. OTCase family.

Its subcellular location is the cytoplasm. It catalyses the reaction carbamoyl phosphate + L-ornithine = L-citrulline + phosphate + H(+). Its pathway is amino-acid degradation; L-arginine degradation via ADI pathway; carbamoyl phosphate from L-arginine: step 2/2. In terms of biological role, reversibly catalyzes the transfer of the carbamoyl group from carbamoyl phosphate (CP) to the N(epsilon) atom of ornithine (ORN) to produce L-citrulline. In Staphylococcus epidermidis (strain ATCC 12228 / FDA PCI 1200), this protein is Ornithine carbamoyltransferase 1, catabolic (arcB1).